Here is a 299-residue protein sequence, read N- to C-terminus: GTPase Era (299 aa).

Residues 4–171 (KSGFVAILGR…VDILSENLDE (168 aa)) enclose the Era-type G domain. The interval 12–19 (GRPNVGKS) is G1. 12–19 (GRPNVGKS) lines the GTP pocket. A G2 region spans residues 38-42 (XTTRN). The tract at residues 59 to 62 (DTPG) is G3. GTP-binding positions include 59 to 63 (DTPGI) and 121 to 124 (NKID). The segment at 121 to 124 (NKID) is G4. The segment at 150–152 (ISA) is G5. A KH type-2 domain is found at 202–280 (TREEIPHSVA…FLETWVKVKK (79 aa)).

Belongs to the TRAFAC class TrmE-Era-EngA-EngB-Septin-like GTPase superfamily. Era GTPase family. Monomer.

The protein resides in the cytoplasm. It localises to the cell membrane. Its function is as follows. An essential GTPase that binds both GDP and GTP, with rapid nucleotide exchange. Plays a role in 16S rRNA processing and 30S ribosomal subunit biogenesis and possibly also in cell cycle regulation and energy metabolism. This is GTPase Era from Streptococcus pneumoniae serotype 19F (strain G54).